Here is a 95-residue protein sequence, read N- to C-terminus: YcgL domain-containing protein Sden_1630 (95 aa).

A YcgL domain is found at 1–85 (MICTVYKSRR…PKANLLEEHK (85 aa)).

This is YcgL domain-containing protein Sden_1630 from Shewanella denitrificans (strain OS217 / ATCC BAA-1090 / DSM 15013).